The following is a 340-amino-acid chain: NAC domain-containing protein 89 (340 aa).

The NAC domain occupies 21–164 (VFPGFKFSPT…AMVVCRVRRN (144 aa)). The DNA-binding element occupies 119-170 (IGTKRTLVFHIGRAPKGERTDWIMHEYCVKGVSLDDAMVVCRVRRNKEYNSG). Over residues 167 to 181 (YNSGTSQKAPKPNSS) the composition is skewed to polar residues. The disordered stretch occupies residues 167–198 (YNSGTSQKAPKPNSSAEKHAKVQNGATSSGSP).

Interacts with PAS1.

The protein localises to the cytoplasm. The protein resides in the nucleus. Its function is as follows. Transcription factor involved in plant cell division. The protein is NAC domain-containing protein 89 (NAC089) of Arabidopsis thaliana (Mouse-ear cress).